Consider the following 198-residue polypeptide: Imidazole glycerol phosphate synthase subunit HisH (198 aa).

A Glutamine amidotransferase type-1 domain is found at 1–194 (MIAIIDYGLG…LKGGFQDDQT (194 aa)). Cys77 functions as the Nucleophile in the catalytic mechanism. Catalysis depends on residues His169 and Glu171.

In terms of assembly, heterodimer of HisH and HisF.

The protein localises to the cytoplasm. It catalyses the reaction 5-[(5-phospho-1-deoxy-D-ribulos-1-ylimino)methylamino]-1-(5-phospho-beta-D-ribosyl)imidazole-4-carboxamide + L-glutamine = D-erythro-1-(imidazol-4-yl)glycerol 3-phosphate + 5-amino-1-(5-phospho-beta-D-ribosyl)imidazole-4-carboxamide + L-glutamate + H(+). The catalysed reaction is L-glutamine + H2O = L-glutamate + NH4(+). Its pathway is amino-acid biosynthesis; L-histidine biosynthesis; L-histidine from 5-phospho-alpha-D-ribose 1-diphosphate: step 5/9. In terms of biological role, IGPS catalyzes the conversion of PRFAR and glutamine to IGP, AICAR and glutamate. The HisH subunit catalyzes the hydrolysis of glutamine to glutamate and ammonia as part of the synthesis of IGP and AICAR. The resulting ammonia molecule is channeled to the active site of HisF. In Staphylococcus saprophyticus subsp. saprophyticus (strain ATCC 15305 / DSM 20229 / NCIMB 8711 / NCTC 7292 / S-41), this protein is Imidazole glycerol phosphate synthase subunit HisH.